Reading from the N-terminus, the 500-residue chain is L-arabinose isomerase (500 aa).

Mn(2+)-binding residues include Glu306, Glu333, His350, and His450.

It belongs to the arabinose isomerase family. As to quaternary structure, homohexamer. Mn(2+) serves as cofactor.

It carries out the reaction beta-L-arabinopyranose = L-ribulose. Its pathway is carbohydrate degradation; L-arabinose degradation via L-ribulose; D-xylulose 5-phosphate from L-arabinose (bacterial route): step 1/3. In terms of biological role, catalyzes the conversion of L-arabinose to L-ribulose. The protein is L-arabinose isomerase of Salmonella arizonae (strain ATCC BAA-731 / CDC346-86 / RSK2980).